The primary structure comprises 472 residues: Phosphoenolpyruvate carboxykinase (ATP), glycosomal (472 aa).

Position 221 to 228 (221 to 228 (GLSGTGKT)) interacts with ATP.

It belongs to the phosphoenolpyruvate carboxykinase (ATP) family. As to quaternary structure, homodimer.

It localises to the glycosome. The enzyme catalyses oxaloacetate + ATP = phosphoenolpyruvate + ADP + CO2. Its pathway is carbohydrate biosynthesis; gluconeogenesis. The chain is Phosphoenolpyruvate carboxykinase (ATP), glycosomal (PEPCK) from Trypanosoma cruzi.